We begin with the raw amino-acid sequence, 647 residues long: Threonine--tRNA ligase (647 aa).

One can recognise a TGS domain in the interval 1-61; that stretch reads MIKITFPDGA…EEDGSIEIVT (61 aa). A catalytic region spans residues 240-538; it reads DHRKLGKELD…LIETYKGAFP (299 aa). The Zn(2+) site is built by Cys334, His385, and His515.

This sequence belongs to the class-II aminoacyl-tRNA synthetase family. In terms of assembly, homodimer. Requires Zn(2+) as cofactor.

The protein resides in the cytoplasm. The catalysed reaction is tRNA(Thr) + L-threonine + ATP = L-threonyl-tRNA(Thr) + AMP + diphosphate + H(+). In terms of biological role, catalyzes the attachment of threonine to tRNA(Thr) in a two-step reaction: L-threonine is first activated by ATP to form Thr-AMP and then transferred to the acceptor end of tRNA(Thr). Also edits incorrectly charged L-seryl-tRNA(Thr). In Streptococcus pyogenes serotype M3 (strain ATCC BAA-595 / MGAS315), this protein is Threonine--tRNA ligase.